Here is a 243-residue protein sequence, read N- to C-terminus: Isoprenyl transferase 2 (243 aa).

Aspartate 23 is a catalytic residue. Aspartate 23 contributes to the Mg(2+) binding site. Substrate contacts are provided by residues 24–27 (GNGR), tryptophan 28, arginine 36, histidine 40, and 68–70 (STE). Catalysis depends on asparagine 71, which acts as the Proton acceptor. Substrate is bound by residues tryptophan 72, arginine 74, arginine 191, and 197 to 199 (RTS). Glutamate 210 provides a ligand contact to Mg(2+).

The protein belongs to the UPP synthase family. As to quaternary structure, homodimer. It depends on Mg(2+) as a cofactor.

Catalyzes the condensation of isopentenyl diphosphate (IPP) with allylic pyrophosphates generating different type of terpenoids. The sequence is that of Isoprenyl transferase 2 from Corynebacterium glutamicum (strain ATCC 13032 / DSM 20300 / JCM 1318 / BCRC 11384 / CCUG 27702 / LMG 3730 / NBRC 12168 / NCIMB 10025 / NRRL B-2784 / 534).